Consider the following 106-residue polypeptide: Protein translation factor SUI1 homolog (106 aa).

It belongs to the SUI1 family.

The polypeptide is Protein translation factor SUI1 homolog (Methanopyrus kandleri (strain AV19 / DSM 6324 / JCM 9639 / NBRC 100938)).